A 370-amino-acid chain; its full sequence is MSTKELYIGVMSGTSMDGVDCALVEFDQEQVRLIAHSDYPMPADLRQQLLSVCTGQATNLKQIGELDHRLGHLFADAVMDLLSQAGVDASQICAIGNHGQTVFHQPNGEFPFTTQLGDANIIATRTNIDTVADFRRKDMALGGQGAPLVPAFHQSVFALQDSTTVVLNIGGIANISVLHPTRPVLGYDTGPGNMLMDAWCETHTQQNYDKDARFALQGEVNEALLNSLLQEPYLHQDAPKSTGRELFNMEWLTAKLQGQNYRSEDVQRTLCEYTALTISKEVERFRYGPTPQLLVCGGGARNPLLMQRLQQQLSHWQVSTTDAKGVSGDYMEAMAFAWLAYRHMHRLPSNLPEVTGASRLASLGVLYPKA.

13-20 contacts ATP; that stretch reads GTSMDGVD.

Belongs to the anhydro-N-acetylmuramic acid kinase family.

The enzyme catalyses 1,6-anhydro-N-acetyl-beta-muramate + ATP + H2O = N-acetyl-D-muramate 6-phosphate + ADP + H(+). It participates in amino-sugar metabolism; 1,6-anhydro-N-acetylmuramate degradation. The protein operates within cell wall biogenesis; peptidoglycan recycling. In terms of biological role, catalyzes the specific phosphorylation of 1,6-anhydro-N-acetylmuramic acid (anhMurNAc) with the simultaneous cleavage of the 1,6-anhydro ring, generating MurNAc-6-P. Is required for the utilization of anhMurNAc either imported from the medium or derived from its own cell wall murein, and thus plays a role in cell wall recycling. This chain is Anhydro-N-acetylmuramic acid kinase, found in Vibrio vulnificus (strain YJ016).